The sequence spans 493 residues: Cholesteryl ester transfer protein (493 aa).

A signal peptide spans 1-17 (MLAATVLTLALLGNAHA). Asparagine 105 carries an N-linked (GlcNAc...) (complex) asparagine glycan. A disulfide bond links cysteine 160 and cysteine 201. N-linked (GlcNAc...) asparagine glycans are attached at residues asparagine 257, asparagine 358, and asparagine 413.

The protein belongs to the BPI/LBP/Plunc superfamily. BPI/LBP family. In terms of tissue distribution, expressed by the liver and secreted in plasma.

It localises to the secreted. It carries out the reaction cholesteryl (9Z-octadecenoate)(in) = cholesteryl (9Z-octadecenoate)(out). The enzyme catalyses 1,2,3-tri-(9Z-octadecenoyl)-glycerol(in) = 1,2,3-tri-(9Z-octadecenoyl)-glycerol(out). It catalyses the reaction cholesteryl (9Z,12Z)-octadecadienoate(in) = cholesteryl (9Z,12Z)-octadecadienoate(out). In terms of biological role, involved in the transfer of neutral lipids, including cholesteryl ester and triglyceride, among lipoprotein particles. Allows the net movement of cholesteryl ester from high density lipoproteins/HDL to triglyceride-rich very low density lipoproteins/VLDL, and the equimolar transport of triglyceride from VLDL to HDL. Regulates the reverse cholesterol transport, by which excess cholesterol is removed from peripheral tissues and returned to the liver for elimination. This Homo sapiens (Human) protein is Cholesteryl ester transfer protein.